The primary structure comprises 507 residues: Histidine ammonia-lyase (507 aa).

The 5-imidazolinone (Ala-Gly) cross-link spans 141-143 (ASG). Residue Ser-142 is modified to 2,3-didehydroalanine (Ser).

Belongs to the PAL/histidase family. In terms of processing, contains an active site 4-methylidene-imidazol-5-one (MIO), which is formed autocatalytically by cyclization and dehydration of residues Ala-Ser-Gly.

It is found in the cytoplasm. It carries out the reaction L-histidine = trans-urocanate + NH4(+). The protein operates within amino-acid degradation; L-histidine degradation into L-glutamate; N-formimidoyl-L-glutamate from L-histidine: step 1/3. The polypeptide is Histidine ammonia-lyase (Burkholderia cenocepacia (strain HI2424)).